A 242-amino-acid polypeptide reads, in one-letter code: LexA repressor (242 aa).

A DNA-binding region (H-T-H motif) is located at residues 26 to 46 (FEEMKAALNLKSKSGIHRLIS). Residues serine 163 and lysine 201 each act as for autocatalytic cleavage activity in the active site.

It belongs to the peptidase S24 family. In terms of assembly, homodimer.

The catalysed reaction is Hydrolysis of Ala-|-Gly bond in repressor LexA.. In terms of biological role, represses a number of genes involved in the response to DNA damage (SOS response), including recA and lexA. In the presence of single-stranded DNA, RecA interacts with LexA causing an autocatalytic cleavage which disrupts the DNA-binding part of LexA, leading to derepression of the SOS regulon and eventually DNA repair. The chain is LexA repressor from Granulibacter bethesdensis (strain ATCC BAA-1260 / CGDNIH1).